A 146-amino-acid chain; its full sequence is Hemoglobin cathodic subunit beta (146 aa).

In terms of domain architecture, Globin spans 2-146 (QWSSSERSTI…VVSALSRQYF (145 aa)). Heme b contacts are provided by histidine 63 and histidine 92.

This sequence belongs to the globin family. As to quaternary structure, heterotetramer of two alpha chains and two beta chains. Red blood cells.

In terms of biological role, involved in oxygen transport from the gills to the various peripheral tissues. This chain is Hemoglobin cathodic subunit beta, found in Conger conger (Conger eel).